The primary structure comprises 126 residues: Histone H2B type 2-E (126 aa).

The segment covering 1–12 has biased composition (low complexity); it reads MPEPAKSAPAPK. A disordered region spans residues 1-32; it reads MPEPAKSAPAPKKGSKKAVTKAQKKDGKKRKR. Pro2 is modified (N-acetylproline). An ADP-ribosyl glutamic acid modification is found at Glu3. N6-(2-hydroxyisobutyryl)lysine; alternate is present on Lys6. Lys6 carries the post-translational modification N6-(beta-hydroxybutyryl)lysine; alternate. Lys6 carries the post-translational modification N6-acetyllysine; alternate. Residue Lys6 is modified to N6-butyryllysine; alternate. Lys6 is modified (N6-crotonyllysine; alternate). Lys6 carries the post-translational modification N6-lactoyllysine; alternate. Residue Lys6 forms a Glycyl lysine isopeptide (Lys-Gly) (interchain with G-Cter in SUMO2); alternate linkage. Ser7 is modified (ADP-ribosylserine). At Lys12 the chain carries N6-(beta-hydroxybutyryl)lysine; alternate. 2 positions are modified to N6-acetyllysine; alternate: Lys12 and Lys13. An N6-crotonyllysine; alternate mark is found at Lys12 and Lys13. Lys12 bears the N6-lactoyllysine; alternate mark. Lys13 carries the N6-(2-hydroxyisobutyryl)lysine; alternate modification. Residue Ser15 is modified to Phosphoserine; by STK4/MST1. Lys16, Lys17, Lys21, and Lys24 each carry N6-acetyllysine; alternate. N6-crotonyllysine; alternate is present on residues Lys16, Lys17, Lys21, and Lys24. N6-lactoyllysine; alternate occurs at positions 16, 17, 21, and 24. Lys17 carries the post-translational modification N6-glutaryllysine; alternate. Residues Lys21 and Lys24 each carry the N6-(2-hydroxyisobutyryl)lysine; alternate modification. Position 21 is an N6-(beta-hydroxybutyryl)lysine; alternate (Lys21). N6-butyryllysine; alternate is present on Lys21. Lys21 participates in a covalent cross-link: Glycyl lysine isopeptide (Lys-Gly) (interchain with G-Cter in SUMO2); alternate. Position 25 is an N6-(2-hydroxyisobutyryl)lysine (Lys25). An N6-(2-hydroxyisobutyryl)lysine; alternate modification is found at Lys35. Lys35 is subject to N6-(beta-hydroxybutyryl)lysine; alternate. Lys35 carries the post-translational modification N6-crotonyllysine; alternate. Lys35 carries the N6-glutaryllysine; alternate modification. Position 35 is an N6-succinyllysine; alternate (Lys35). Lys35 participates in a covalent cross-link: Glycyl lysine isopeptide (Lys-Gly) (interchain with G-Cter in ubiquitin); alternate. Glu36 is subject to PolyADP-ribosyl glutamic acid. The residue at position 37 (Ser37) is a Phosphoserine; by AMPK. An N6-(2-hydroxyisobutyryl)lysine; alternate mark is found at Lys44, Lys47, and Lys58. Position 44 is an N6-lactoyllysine; alternate (Lys44). N6-glutaryllysine; alternate occurs at positions 44 and 47. Lys47 carries the post-translational modification N6-methyllysine; alternate. Position 58 is an N6,N6-dimethyllysine; alternate (Lys58). At Arg80 the chain carries Dimethylated arginine. Lys86 is subject to N6-(2-hydroxyisobutyryl)lysine; alternate. Residue Lys86 is modified to N6-acetyllysine; alternate. Lys86 is modified (N6-lactoyllysine; alternate). Lys86 carries the N6,N6,N6-trimethyllysine; alternate modification. Residues Arg87 and Arg93 each carry the omega-N-methylarginine modification. At Lys109 the chain carries N6-(2-hydroxyisobutyryl)lysine; alternate. An N6-lactoyllysine; alternate modification is found at Lys109. Lys109 bears the N6-glutaryllysine; alternate mark. Lys109 is modified (N6-methyllysine; alternate). O-linked (GlcNAc) serine glycosylation is present at Ser113. Residue Thr116 is modified to Phosphothreonine. N6-(2-hydroxyisobutyryl)lysine; alternate is present on residues Lys117 and Lys121. Lys117 is subject to N6-(beta-hydroxybutyryl)lysine; alternate. Residues Lys117 and Lys121 each carry the N6-lactoyllysine; alternate modification. An N6-glutaryllysine; alternate mark is found at Lys117 and Lys121. An N6-succinyllysine; alternate mark is found at Lys117 and Lys121. N6-methylated lysine; alternate is present on Lys117. A Glycyl lysine isopeptide (Lys-Gly) (interchain with G-Cter in ubiquitin); alternate cross-link involves residue Lys121.

The protein belongs to the histone H2B family. The nucleosome is a histone octamer containing two molecules each of H2A, H2B, H3 and H4 assembled in one H3-H4 heterotetramer and two H2A-H2B heterodimers. The octamer wraps approximately 147 bp of DNA. Post-translationally, monoubiquitination at Lys-35 (H2BK34Ub) by the MSL1/MSL2 dimer is required for histone H3 'Lys-4' (H3K4me) and 'Lys-79' (H3K79me) methylation and transcription activation at specific gene loci, such as HOXA9 and MEIS1 loci. Similarly, monoubiquitination at Lys-121 (H2BK120Ub) by the RNF20/40 complex gives a specific tag for epigenetic transcriptional activation and is also prerequisite for histone H3 'Lys-4' and 'Lys-79' methylation. It also functions cooperatively with the FACT dimer to stimulate elongation by RNA polymerase II. H2BK120Ub also acts as a regulator of mRNA splicing: deubiquitination by USP49 is required for efficient cotranscriptional splicing of a large set of exons. Phosphorylated on Ser-15 (H2BS14ph) by STK4/MST1 during apoptosis; which facilitates apoptotic chromatin condensation. Also phosphorylated on Ser-15 in response to DNA double strand breaks (DSBs), and in correlation with somatic hypermutation and immunoglobulin class-switch recombination. Phosphorylation at Ser-37 (H2BS36ph) by AMPK in response to stress promotes transcription. In terms of processing, ADP-ribosylated by PARP1 or PARP2 on Ser-7 (H2BS6ADPr) in response to DNA damage. H2BS6ADPr promotes recruitment of CHD1L. Mono-ADP-ribosylated on Glu-3 (H2BE2ADPr) by PARP3 in response to single-strand breaks. Poly ADP-ribosylation on Glu-36 (H2BE35ADPr) by PARP1 regulates adipogenesis: it inhibits phosphorylation at Ser-37 (H2BS36ph), thereby blocking expression of pro-adipogenetic genes. Post-translationally, crotonylation (Kcr) is specifically present in male germ cells and marks testis-specific genes in post-meiotic cells, including X-linked genes that escape sex chromosome inactivation in haploid cells. Crotonylation marks active promoters and enhancers and confers resistance to transcriptional repressors. It is also associated with post-meiotically activated genes on autosomes. GlcNAcylation at Ser-113 promotes monoubiquitination of Lys-121. It fluctuates in response to extracellular glucose, and associates with transcribed genes. In terms of processing, lactylated in macrophages by EP300/P300 by using lactoyl-CoA directly derived from endogenous or exogenous lactate, leading to stimulates gene transcription.

The protein resides in the nucleus. The protein localises to the chromosome. Its function is as follows. Core component of nucleosome. Nucleosomes wrap and compact DNA into chromatin, limiting DNA accessibility to the cellular machineries which require DNA as a template. Histones thereby play a central role in transcription regulation, DNA repair, DNA replication and chromosomal stability. DNA accessibility is regulated via a complex set of post-translational modifications of histones, also called histone code, and nucleosome remodeling. In terms of biological role, has broad antibacterial activity. May contribute to the formation of the functional antimicrobial barrier of the colonic epithelium, and to the bactericidal activity of amniotic fluid. This is Histone H2B type 2-E from Pongo abelii (Sumatran orangutan).